We begin with the raw amino-acid sequence, 254 residues long: NH(3)-dependent NAD(+) synthetase (254 aa).

Residue 32–39 coordinates ATP; sequence GISGGVDS. Residue aspartate 38 participates in Mg(2+) binding. Arginine 113 contacts deamido-NAD(+). Threonine 133 contributes to the ATP binding site. Residue glutamate 138 coordinates Mg(2+). 2 residues coordinate deamido-NAD(+): lysine 146 and aspartate 153. Positions 162 and 184 each coordinate ATP. 244-245 provides a ligand contact to deamido-NAD(+); it reads HK.

Belongs to the NAD synthetase family. As to quaternary structure, homodimer.

It carries out the reaction deamido-NAD(+) + NH4(+) + ATP = AMP + diphosphate + NAD(+) + H(+). It participates in cofactor biosynthesis; NAD(+) biosynthesis; NAD(+) from deamido-NAD(+) (ammonia route): step 1/1. Its function is as follows. Catalyzes the ATP-dependent amidation of deamido-NAD to form NAD. Uses ammonia as a nitrogen source. The polypeptide is NH(3)-dependent NAD(+) synthetase (Thermococcus sibiricus (strain DSM 12597 / MM 739)).